A 194-amino-acid polypeptide reads, in one-letter code: Xanthine phosphoribosyltransferase (194 aa).

Residues L20 and N27 each contribute to the xanthine site. A 5-phospho-alpha-D-ribose 1-diphosphate-binding site is contributed by 128 to 132 (ANGQA). A xanthine-binding site is contributed by K156.

The protein belongs to the purine/pyrimidine phosphoribosyltransferase family. Xpt subfamily. As to quaternary structure, homodimer.

The protein localises to the cytoplasm. The catalysed reaction is XMP + diphosphate = xanthine + 5-phospho-alpha-D-ribose 1-diphosphate. It functions in the pathway purine metabolism; XMP biosynthesis via salvage pathway; XMP from xanthine: step 1/1. Converts the preformed base xanthine, a product of nucleic acid breakdown, to xanthosine 5'-monophosphate (XMP), so it can be reused for RNA or DNA synthesis. This chain is Xanthine phosphoribosyltransferase, found in Geobacillus thermodenitrificans (strain NG80-2).